The following is a 586-amino-acid chain: Arginine--tRNA ligase (586 aa).

A 'HIGH' region motif is present at residues 128-138 (ANPTGPLHVGH).

It belongs to the class-I aminoacyl-tRNA synthetase family. Monomer.

It localises to the cytoplasm. The catalysed reaction is tRNA(Arg) + L-arginine + ATP = L-arginyl-tRNA(Arg) + AMP + diphosphate. The polypeptide is Arginine--tRNA ligase (Thioalkalivibrio sulfidiphilus (strain HL-EbGR7)).